A 433-amino-acid chain; its full sequence is Serine hydroxymethyltransferase (433 aa).

(6S)-5,6,7,8-tetrahydrofolate contacts are provided by residues Leu121 and 125-127 (GHI). The residue at position 231 (Lys231) is an N6-(pyridoxal phosphate)lysine.

The protein belongs to the SHMT family. As to quaternary structure, homodimer. It depends on pyridoxal 5'-phosphate as a cofactor.

It localises to the cytoplasm. The protein operates within amino-acid biosynthesis; glycine biosynthesis; glycine from L-serine: step 1/1. Its function is as follows. Catalyzes the reversible interconversion of serine and glycine with a modified folate serving as the one-carbon carrier. Also exhibits a pteridine-independent aldolase activity toward beta-hydroxyamino acids, producing glycine and aldehydes, via a retro-aldol mechanism. The protein is Serine hydroxymethyltransferase of Picrophilus torridus (strain ATCC 700027 / DSM 9790 / JCM 10055 / NBRC 100828 / KAW 2/3).